The following is a 1391-amino-acid chain: DNA-directed RNA polymerase subunit beta' (1391 aa).

Zn(2+) is bound by residues cysteine 72, cysteine 74, cysteine 87, and cysteine 90. Mg(2+)-binding residues include aspartate 462, aspartate 464, and aspartate 466. Zn(2+)-binding residues include cysteine 816, cysteine 890, cysteine 897, and cysteine 900.

This sequence belongs to the RNA polymerase beta' chain family. The RNAP catalytic core consists of 2 alpha, 1 beta, 1 beta' and 1 omega subunit. When a sigma factor is associated with the core the holoenzyme is formed, which can initiate transcription. It depends on Mg(2+) as a cofactor. Requires Zn(2+) as cofactor.

The enzyme catalyses RNA(n) + a ribonucleoside 5'-triphosphate = RNA(n+1) + diphosphate. Its function is as follows. DNA-dependent RNA polymerase catalyzes the transcription of DNA into RNA using the four ribonucleoside triphosphates as substrates. The sequence is that of DNA-directed RNA polymerase subunit beta' from Neisseria meningitidis serogroup C / serotype 2a (strain ATCC 700532 / DSM 15464 / FAM18).